Reading from the N-terminus, the 443-residue chain is Protein translocase subunit SecY (443 aa).

The next 10 membrane-spanning stretches (helical) occupy residues 24 to 44 (LFVI…IPGI), 77 to 97 (IFAL…LLTV), 125 to 145 (LVLA…MPGM), 154 to 174 (FAFY…LMWL), 183 to 203 (IGNG…PPAI), 217 to 237 (FLVL…VVFV), 274 to 294 (VIPA…ASWF), 317 to 337 (YVLL…ALVF), 370 to 390 (MTRL…IPEF), and 397 to 417 (VPFY…MDFM).

The protein belongs to the SecY/SEC61-alpha family. Component of the Sec protein translocase complex. Heterotrimer consisting of SecY, SecE and SecG subunits. The heterotrimers can form oligomers, although 1 heterotrimer is thought to be able to translocate proteins. Interacts with the ribosome. Interacts with SecDF, and other proteins may be involved. Interacts with SecA.

It localises to the cell inner membrane. In terms of biological role, the central subunit of the protein translocation channel SecYEG. Consists of two halves formed by TMs 1-5 and 6-10. These two domains form a lateral gate at the front which open onto the bilayer between TMs 2 and 7, and are clamped together by SecE at the back. The channel is closed by both a pore ring composed of hydrophobic SecY resides and a short helix (helix 2A) on the extracellular side of the membrane which forms a plug. The plug probably moves laterally to allow the channel to open. The ring and the pore may move independently. This chain is Protein translocase subunit SecY, found in Escherichia coli O157:H7.